A 345-amino-acid polypeptide reads, in one-letter code: tRNA N6-adenosine threonylcarbamoyltransferase (345 aa).

2 residues coordinate Fe cation: histidine 111 and histidine 115. Substrate-binding positions include 134 to 138, aspartate 167, glycine 180, and asparagine 276; that span reads LVSGG. Aspartate 304 is a binding site for Fe cation.

It belongs to the KAE1 / TsaD family. The cofactor is Fe(2+).

The protein resides in the cytoplasm. It catalyses the reaction L-threonylcarbamoyladenylate + adenosine(37) in tRNA = N(6)-L-threonylcarbamoyladenosine(37) in tRNA + AMP + H(+). Required for the formation of a threonylcarbamoyl group on adenosine at position 37 (t(6)A37) in tRNAs that read codons beginning with adenine. Is involved in the transfer of the threonylcarbamoyl moiety of threonylcarbamoyl-AMP (TC-AMP) to the N6 group of A37, together with TsaE and TsaB. TsaD likely plays a direct catalytic role in this reaction. This Bordetella avium (strain 197N) protein is tRNA N6-adenosine threonylcarbamoyltransferase.